The chain runs to 127 residues: Small ribosomal subunit protein uS11 (127 aa).

It belongs to the universal ribosomal protein uS11 family. Part of the 30S ribosomal subunit. Interacts with proteins S7 and S18. Binds to IF-3.

Located on the platform of the 30S subunit, it bridges several disparate RNA helices of the 16S rRNA. Forms part of the Shine-Dalgarno cleft in the 70S ribosome. In Rickettsia canadensis (strain McKiel), this protein is Small ribosomal subunit protein uS11.